We begin with the raw amino-acid sequence, 1098 residues long: Sister-chromatid cohesion protein 3 (1098 aa).

The interval 1–68 is disordered; sequence MEDSPQGLKR…RSRTHPPQQN (68 aa). Residues 245 to 265 are a coiled coil; that stretch reads RVDSLNKRLSVTHEQITTLED. One can recognise an SCD domain in the interval 275-360; sequence FVHRYRDIDN…QRFSNRMIEM (86 aa). 3 coiled-coil regions span residues 632–653, 888–908, and 1009–1032; these read KLKDLEDELLDKITSAIREVKD, LESLKRAYHRYSSELSSGREE, and LETLEEKCLKNEDLQDDKEAANVR. The disordered stretch occupies residues 1027–1077; the sequence is EAANVRRRGRPRKRPETERKRLFDEQSGSDEDESISGGSDREDKLDEDAPL. Positions 1040–1050 are enriched in basic and acidic residues; the sequence is RPETERKRLFD.

The protein belongs to the SCC3 family. Part of the cohesin complex. Interacts with DEK3. Expressed in roots, mature leaves, buds and seedlings.

It localises to the nucleus. The protein resides in the chromosome. Essential component of cohesin complex, a complex required for the cohesion of sister chromatids after DNA replication. The cohesin complex apparently forms a large proteinaceous ring within which sister chromatids can be trapped. At anaphase, the complex is cleaved and dissociates from chromatin, allowing sister chromatids to segregate. The cohesin complex may also play a role in spindle pole assembly during mitosis. Required for centromere cohesion maintenance at anaphase I and for the monopolar orientation of the kinetochores during both male and female meiosis. Also involved in mitosis. This chain is Sister-chromatid cohesion protein 3, found in Arabidopsis thaliana (Mouse-ear cress).